The chain runs to 117 residues: Photosystem II reaction center Psb28 protein (117 aa).

The protein belongs to the Psb28 family. Part of the photosystem II complex.

It is found in the cellular thylakoid membrane. This chain is Photosystem II reaction center Psb28 protein, found in Prochlorococcus marinus (strain AS9601).